The primary structure comprises 253 residues: Triosephosphate isomerase (253 aa).

9–11 (NWK) contributes to the substrate binding site. His95 (electrophile) is an active-site residue. Glu167 serves as the catalytic Proton acceptor. Substrate contacts are provided by residues Gly173, Ser213, and 234–235 (GG). Ser213 is subject to Phosphoserine.

Belongs to the triosephosphate isomerase family. Homodimer.

Its subcellular location is the cytoplasm. It catalyses the reaction D-glyceraldehyde 3-phosphate = dihydroxyacetone phosphate. It participates in carbohydrate biosynthesis; gluconeogenesis. The protein operates within carbohydrate degradation; glycolysis; D-glyceraldehyde 3-phosphate from glycerone phosphate: step 1/1. In terms of biological role, involved in the gluconeogenesis. Catalyzes stereospecifically the conversion of dihydroxyacetone phosphate (DHAP) to D-glyceraldehyde-3-phosphate (G3P). This chain is Triosephosphate isomerase, found in Geobacillus kaustophilus (strain HTA426).